We begin with the raw amino-acid sequence, 210 residues long: Calcineurin B-like protein 4 (210 aa).

Residue Gly-2 is the site of N-myristoyl glycine attachment. EF-hand domains are found at residues 31–66 (EVEALRELYNKMSYSIIKDGLIHKEEFQLALFRNSR), 67–102 (KANLFADRVFDLFDLKRNGVIEFGEFVRSLSVFHPK), 104–139 (PKSEKTAFAFKLYDLRGTGYIEKEELREMVLALLDE), and 148–183 (AVEAIVDNTFSQADSNGDGRIDPEEWEEFVKANPAS). Ca(2+) is bound by residues Asp-161, Asn-163, Asp-165, Arg-167, and Glu-172.

Belongs to the calcineurin regulatory subunit family. Homodimer. Interacts with CIPK24. In terms of tissue distribution, expressed in leaves.

The protein resides in the cell membrane. Acts as a calcium sensor involved in the regulatory pathway for the control of intracellular Na(+) and K(+) homeostasis and salt tolerance. Operates in synergy with CIPK24 to activate the plasma membrane Na(+)/H(+) antiporter SOS1. May function as positive regulator of salt stress responses. CBL proteins interact with CIPK serine-threonine protein kinases. Binding of a CBL protein to the regulatory NAF domain of a CIPK protein lead to the activation of the kinase in a calcium-dependent manner. The sequence is that of Calcineurin B-like protein 4 (CBL4) from Oryza sativa subsp. japonica (Rice).